Consider the following 75-residue polypeptide: Sec-independent protein translocase protein TatA (75 aa).

A helical transmembrane segment spans residues 1–21; it reads MGSFSIWHWLIVLVIVVLVFG. Basic and acidic residues-rich tracts occupy residues 43 to 54 and 66 to 75; these read MRDSEKSGEDVQ and ATDKSHTVSH. The tract at residues 43–75 is disordered; sequence MRDSEKSGEDVQQKIGGDTLDAQATDKSHTVSH.

This sequence belongs to the TatA/E family. In terms of assembly, the Tat system comprises two distinct complexes: a TatABC complex, containing multiple copies of TatA, TatB and TatC subunits, and a separate TatA complex, containing only TatA subunits. Substrates initially bind to the TatABC complex, which probably triggers association of the separate TatA complex to form the active translocon.

Its subcellular location is the cell inner membrane. Its function is as follows. Part of the twin-arginine translocation (Tat) system that transports large folded proteins containing a characteristic twin-arginine motif in their signal peptide across membranes. TatA could form the protein-conducting channel of the Tat system. The protein is Sec-independent protein translocase protein TatA of Aromatoleum aromaticum (strain DSM 19018 / LMG 30748 / EbN1) (Azoarcus sp. (strain EbN1)).